Here is a 290-residue protein sequence, read N- to C-terminus: Small ribosomal subunit biogenesis GTPase RsgA (290 aa).

Residues 62 to 213 (KNSLVRPPIV…IADTPGFSSL (152 aa)) form the CP-type G domain. GTP-binding positions include 111 to 114 (SKLD) and 156 to 164 (GQTGVGKST). The Zn(2+) site is built by Cys-237, Cys-242, His-244, and Cys-250.

It belongs to the TRAFAC class YlqF/YawG GTPase family. RsgA subfamily. Monomer. Associates with 30S ribosomal subunit, binds 16S rRNA. Requires Zn(2+) as cofactor.

It is found in the cytoplasm. Its function is as follows. One of several proteins that assist in the late maturation steps of the functional core of the 30S ribosomal subunit. Helps release RbfA from mature subunits. May play a role in the assembly of ribosomal proteins into the subunit. Circularly permuted GTPase that catalyzes slow GTP hydrolysis, GTPase activity is stimulated by the 30S ribosomal subunit. This chain is Small ribosomal subunit biogenesis GTPase RsgA, found in Streptococcus agalactiae serotype V (strain ATCC BAA-611 / 2603 V/R).